We begin with the raw amino-acid sequence, 298 residues long: tRNA-uridine aminocarboxypropyltransferase 2 (298 aa).

Position 1 is an N-acetylmethionine (Met1). Positions 1 to 52 (MESQKEARILQEPVARPPGASRSQTPNAKERQEGGPVPAAAALGAEADDDSA) are disordered. Ser132 bears the Phosphoserine mark. The DXTW signature appears at 178-181 (DGTW).

The protein belongs to the TDD superfamily. DTWD2 family.

Its subcellular location is the nucleus. The protein resides in the cytoplasm. The catalysed reaction is a uridine in tRNA + S-adenosyl-L-methionine = a 3-[(3S)-3-amino-3-carboxypropyl]uridine in tRNA + S-methyl-5'-thioadenosine + H(+). Catalyzes the formation of 3-(3-amino-3-carboxypropyl)uridine (acp3U) at position 20a in the D-loop of several cytoplasmic tRNAs (acp3U(20a)). Also has a weak activity to form acp3U at position 20 in the D-loop of tRNAs (acp3U(20)). Involved in glycoRNA biosynthesis by mediating formation of acp3U, which acts as an attachment site for N-glycans on tRNAs. GlycoRNAs consist of RNAs modified with secretory N-glycans that are presented on the cell surface. The protein is tRNA-uridine aminocarboxypropyltransferase 2 of Macaca fascicularis (Crab-eating macaque).